Reading from the N-terminus, the 310-residue chain is MEEENATLLTEFVLTGFLYQPQWKIPLFLAFLVIYLITIMGNLGLIAVIWKDPHLHIPMYLLLGNLAFVDALLSSSVTLKMLINFLAKSKMISLSECKIQLFSFAISVTTECFLLATMAYDRYVAICKPLLYPAIMTNGLCIRLLILSYVGGLLHALIHEGFLFRLTFCNSNIIQHFYCDIIPLLKISYTDSSINFLMVFIFAGSIQVFTIGTVLISYIFVLYTILKKKSVKGMRKAFSTCGAHLLSVSLYYGPLAFMYMGSASPQADDQDMMESLFYTVIVPLLNPMIYSLRNKQVIASFTKMFKRNDV.

Residues 1-28 (MEEENATLLTEFVLTGFLYQPQWKIPLF) lie on the Extracellular side of the membrane. An N-linked (GlcNAc...) asparagine glycan is attached at Asn-5. The helical transmembrane segment at 29-49 (LAFLVIYLITIMGNLGLIAVI) threads the bilayer. The Cytoplasmic segment spans residues 50–56 (WKDPHLH). The chain crosses the membrane as a helical span at residues 57–77 (IPMYLLLGNLAFVDALLSSSV). The Extracellular portion of the chain corresponds to 78 to 98 (TLKMLINFLAKSKMISLSECK). An intrachain disulfide couples Cys-97 to Cys-179. The helical transmembrane segment at 99-119 (IQLFSFAISVTTECFLLATMA) threads the bilayer. Residues 120 to 143 (YDRYVAICKPLLYPAIMTNGLCIR) are Cytoplasmic-facing. Residues 144 to 164 (LLILSYVGGLLHALIHEGFLF) traverse the membrane as a helical segment. Residues 165–195 (RLTFCNSNIIQHFYCDIIPLLKISYTDSSIN) lie on the Extracellular side of the membrane. A helical transmembrane segment spans residues 196 to 216 (FLMVFIFAGSIQVFTIGTVLI). The Cytoplasmic segment spans residues 217–240 (SYIFVLYTILKKKSVKGMRKAFST). The helical transmembrane segment at 241 to 261 (CGAHLLSVSLYYGPLAFMYMG) threads the bilayer. Residues 262–271 (SASPQADDQD) lie on the Extracellular side of the membrane. The helical transmembrane segment at 272–292 (MMESLFYTVIVPLLNPMIYSL) threads the bilayer. Residues 293 to 310 (RNKQVIASFTKMFKRNDV) lie on the Cytoplasmic side of the membrane.

It belongs to the G-protein coupled receptor 1 family.

It is found in the cell membrane. Functionally, odorant receptor. The polypeptide is Olfactory receptor 5H14 (OR5H14) (Homo sapiens (Human)).